We begin with the raw amino-acid sequence, 225 residues long: Insulin-induced gene 2 protein (225 aa).

The Cytoplasmic portion of the chain corresponds to 1–28 (MAENDAKPTLPKKSGPYISSVTSHGMNL). Residues 29–51 (VIRGIVLFFIGVFLALVLNLLQI) form a helical membrane-spanning segment. Over 52–70 (QRNVTLFPPDVITSIFSSA) the chain is Lumenal. Residues 71-88 (WWVPPCCGTASAVIGLLY) form a helical membrane-spanning segment. At 89-103 (PCMDRHLGEPHKFKR) the chain is on the cytoplasmic side. Residues 104–126 (EWSSVMRCVAVFVGINHASAKVD) traverse the membrane as a helical segment. The Lumenal portion of the chain corresponds to 127–129 (FAN). Residues 130–148 (NIQLSLTLAALSIGLWWTF) form a helical membrane-spanning segment. The Cytoplasmic portion of the chain corresponds to 149–153 (DRSRS). A helical transmembrane segment spans residues 154 to 175 (GFGLGVGIAFLATLVSQLLVYN). Topologically, residues 176–189 (GVYQYTSPDFLYVR) are lumenal. The chain crosses the membrane as a helical span at residues 190-207 (SWLPCIFFAGGITMGNIG). Residues 208–225 (RQLAMYECKVIAEKSHED) lie on the Cytoplasmic side of the membrane. The KxHxx signature appears at 219–225 (AEKSHED).

Belongs to the INSIG family. In terms of assembly, interacts with SCAP; interaction is direct and only takes place in the presence of sterols; it prevents interaction between SCAP and the coat protein complex II (COPII). Associates with the SCAP-SREBP complex; association is mediated via its interaction with SCAP and only takes place in the presence of sterols.

It localises to the endoplasmic reticulum membrane. Its function is as follows. Oxysterol-binding protein that mediates feedback control of cholesterol synthesis by controlling both endoplasmic reticulum to Golgi transport of SCAP and degradation of HMGCR. Acts as a negative regulator of cholesterol biosynthesis by mediating the retention of the SCAP-SREBP complex in the endoplasmic reticulum, thereby blocking the processing of sterol regulatory element-binding proteins (SREBPs). Binds oxysterol, including 22-hydroxycholesterol, 24-hydroxycholesterol, 25-hydroxycholesterol and 27-hydroxycholesterol, regulating interaction with SCAP and retention of the SCAP-SREBP complex in the endoplasmic reticulum. In presence of oxysterol, interacts with SCAP, retaining the SCAP-SREBP complex in the endoplasmic reticulum, thereby preventing SCAP from escorting SREBPs to the Golgi. Sterol deprivation reduces oxysterol-binding, disrupting the interaction between INSIG2 and SCAP, thereby promoting Golgi transport of the SCAP-SREBP complex, followed by processing and nuclear translocation of SREBPs. Also regulates cholesterol synthesis by regulating degradation of HMGCR. This Gallus gallus (Chicken) protein is Insulin-induced gene 2 protein.